Reading from the N-terminus, the 501-residue chain is Nuclear receptor subfamily 5 group A member 2 (501 aa).

The segment at residues 43-114 (EELCPVCGDK…KCLSVGMKLE (72 aa)) is a DNA-binding region (nuclear receptor). Residues C46, C49, C63, C66, C82, C88, C98, and C101 each contribute to the Zn(2+) site. NR C4-type zinc fingers lie at residues 46 to 66 (CPVCGDKVSGYHYGLLTCESC) and 82 to 106 (CIENQNCQIDKTQRKRCPYCRFQKC). Positions 112–127 (KLEAVRADRMRGGRNK) are C-terminal extension (CTE). The FTZ-F1 box motif lies at 128-147 (FGPMYKRDRALKQQKKALIR). Positions 186 to 207 (NHTALPPTDYDRSPFVTSPISM) are disordered. The 240-residue stretch at 260–499 (SIPHLILELQ…NLLIEMLHAK (240 aa)) folds into the NR LBD domain. Residues 381–384 (GATL), Y476, and K480 contribute to the a phospholipid derivative site. The tract at residues 488 to 499 (CNNLLIEMLHAK) is AF-2.

It belongs to the nuclear hormone receptor family. NR5 subfamily. As to quaternary structure, monomer; Binds DNA as a monomer. Detected in liver and adrenal gland.

It localises to the nucleus. The protein resides in the chromosome. Its function is as follows. Orphan nuclear receptor that binds DNA as a monomer to the 5'-TCAAGGCCA-3' sequence and controls expression of target genes: regulates key biological processes, such as cholesterol and bile acid synthesis pathways, as well as cartilage, liver and pancreas morphogenesis. Ligand-binding causes conformational change which causes recruitment of coactivators, promoting target gene activation. The specific ligand is unknown, but specific phospholipids, such as phosphatidylethanolamine, phosphatidylserine, dilauroyl phosphatidylcholine and diundecanoyl phosphatidylcholine can act as ligand in vitro. Acts as a pioneer transcription factor, which unwraps target DNA from histones and elicits local opening of closed chromatin. Involved in the formation of connective tissue in lower jaw. The sequence is that of Nuclear receptor subfamily 5 group A member 2 from Gallus gallus (Chicken).